Reading from the N-terminus, the 142-residue chain is Large ribosomal subunit protein uL13 (142 aa).

This sequence belongs to the universal ribosomal protein uL13 family. In terms of assembly, part of the 50S ribosomal subunit.

Its function is as follows. This protein is one of the early assembly proteins of the 50S ribosomal subunit, although it is not seen to bind rRNA by itself. It is important during the early stages of 50S assembly. The polypeptide is Large ribosomal subunit protein uL13 (Thermococcus kodakarensis (strain ATCC BAA-918 / JCM 12380 / KOD1) (Pyrococcus kodakaraensis (strain KOD1))).